Reading from the N-terminus, the 441-residue chain is Ribosomal protein uS12 methylthiotransferase RimO (441 aa).

An MTTase N-terminal domain is found at 8 to 118 (PKIGFVSLGC…VLEHVHHYVP (111 aa)). Residues cysteine 17, cysteine 53, cysteine 82, cysteine 150, cysteine 154, and cysteine 157 each coordinate [4Fe-4S] cluster. Residues 136–373 (LTPRHYAYLK…MQLQQQISAE (238 aa)) form the Radical SAM core domain. The 66-residue stretch at 376 to 441 (QEKVGREILV…DEYDLWGSRV (66 aa)) folds into the TRAM domain.

This sequence belongs to the methylthiotransferase family. RimO subfamily. The cofactor is [4Fe-4S] cluster.

It is found in the cytoplasm. The catalysed reaction is L-aspartate(89)-[ribosomal protein uS12]-hydrogen + (sulfur carrier)-SH + AH2 + 2 S-adenosyl-L-methionine = 3-methylsulfanyl-L-aspartate(89)-[ribosomal protein uS12]-hydrogen + (sulfur carrier)-H + 5'-deoxyadenosine + L-methionine + A + S-adenosyl-L-homocysteine + 2 H(+). Catalyzes the methylthiolation of an aspartic acid residue of ribosomal protein uS12. This chain is Ribosomal protein uS12 methylthiotransferase RimO, found in Escherichia coli (strain UTI89 / UPEC).